Here is a 349-residue protein sequence, read N- to C-terminus: MQQKNKYIRIQEFLKQNKFPDFRMNQIKNAVFQGRINHFNEITVLPKSLRKLLIEEFGESILNIAPLKVQHSEQVTKVLFEISGDEKIETVNMKYKAGWESFCISSQCGCHFGCKFCATGDIGLKRNLTSDEMTDQILYFHLKGHSIDSISFMGMGEALANVQVFDALHVLTNPELFALSPRRLSISTIGIIPGIKKITQDYPQVNLTFSLHSPFNEQRSKLMPINERYPLLEVMDTLDEHIRVTSRKVYIAYIMLPGVNDSIDHANEVVNLLRSRYKRGNLFHVNIIRYNPTVSSPMRFEEVNEKQVVNFYKKLKSAGINVTVRSQFGIDIDAACGQLYGNYQKNKNQ.

The active-site Proton acceptor is Glu-89. Residues 96–331 enclose the Radical SAM core domain; sequence KAGWESFCIS…VTVRSQFGID (236 aa). A disulfide bond links Cys-103 and Cys-336. [4Fe-4S] cluster-binding residues include Cys-110, Cys-114, and Cys-117. S-adenosyl-L-methionine is bound by residues 156–157, Ser-187, 210–212, and Asn-291; these read GE and SLH. The active-site S-methylcysteine intermediate is the Cys-336.

This sequence belongs to the radical SAM superfamily. RlmN family. Cfr subfamily. Requires [4Fe-4S] cluster as cofactor.

Its subcellular location is the cytoplasm. The enzyme catalyses adenosine(2503) in 23S rRNA + 2 reduced [2Fe-2S]-[ferredoxin] + 2 S-adenosyl-L-methionine = 8-methyladenosine(2503) in 23S rRNA + 5'-deoxyadenosine + L-methionine + 2 oxidized [2Fe-2S]-[ferredoxin] + S-adenosyl-L-homocysteine. Its function is as follows. Specifically methylates position 8 of adenine 2503 in 23S rRNA. Confers resistance to some classes of antibiotics. The chain is Ribosomal RNA large subunit methyltransferase Cfr from Bacillus velezensis (strain DSM 23117 / BGSC 10A6 / LMG 26770 / FZB42) (Bacillus amyloliquefaciens subsp. plantarum).